A 272-amino-acid polypeptide reads, in one-letter code: MARLAAFDMDGTLLMPDHHLGRETIATLARLRERDITLTFATGRHVLEMRHILGTLSLDAYLITGNGTRIHSLEGDVLHRQDLDPQVADTVMHHAWDTRASMHVFNDNGWFTGQEIPALLQAHVYSGFRYQVINIKSIPAHQVTKICFCGDHDDLIRLRIQLNEAMEERAHLCFSAVDCLEVLPLGCNKGSALAVLSNHLGLSLADCMAFGDAMNDREMLGSVGRGLIMGNAMPQLIAALPHLAVIGHCGNQAVSHFLTHWLDNPHLPYSPE.

Aspartate 8 serves as the catalytic Nucleophile. Aspartate 8, aspartate 10, and aspartate 212 together coordinate Mg(2+).

Belongs to the HAD-like hydrolase superfamily. Cof family. It depends on Mg(2+) as a cofactor.

It carries out the reaction 4-amino-2-methyl-5-(diphosphooxymethyl)pyrimidine + H2O = 4-amino-2-methyl-5-(phosphooxymethyl)pyrimidine + phosphate + H(+). Catalyzes the hydrolysis of 4-amino-2-methyl-5-hydroxymethylpyrimidine pyrophosphate (HMP-PP) to 4-amino-2-methyl-5-hydroxymethylpyrimidine phosphate (HMP-P). This is HMP-PP phosphatase from Salmonella schwarzengrund (strain CVM19633).